A 157-amino-acid polypeptide reads, in one-letter code: Transcription elongation factor GreA (157 aa).

Belongs to the GreA/GreB family.

Its function is as follows. Necessary for efficient RNA polymerase transcription elongation past template-encoded arresting sites. The arresting sites in DNA have the property of trapping a certain fraction of elongating RNA polymerases that pass through, resulting in locked ternary complexes. Cleavage of the nascent transcript by cleavage factors such as GreA or GreB allows the resumption of elongation from the new 3'terminus. GreA releases sequences of 2 to 3 nucleotides. The polypeptide is Transcription elongation factor GreA (Brucella anthropi (strain ATCC 49188 / DSM 6882 / CCUG 24695 / JCM 21032 / LMG 3331 / NBRC 15819 / NCTC 12168 / Alc 37) (Ochrobactrum anthropi)).